The chain runs to 321 residues: PI-PLC X domain-containing protein 3 (321 aa).

Positions 22–197 constitute a PI-PLC X-box domain; that stretch reads SMHSIPLTNL…DYQVLVFYHS (176 aa). Residues H37 and H114 contribute to the active site.

In terms of tissue distribution, expressed at highest levels in heart. Also detected in kidney, lung, small intestine and colon. Expressed at very low levels, if any, in leukocytes, thymus and skeletal muscle.

The protein localises to the cytoplasm. In Homo sapiens (Human), this protein is PI-PLC X domain-containing protein 3 (PLCXD3).